Here is a 92-residue protein sequence, read N- to C-terminus: Probable Fe(2+)-trafficking protein (92 aa).

It belongs to the Fe(2+)-trafficking protein family.

Its function is as follows. Could be a mediator in iron transactions between iron acquisition and iron-requiring processes, such as synthesis and/or repair of Fe-S clusters in biosynthetic enzymes. The protein is Probable Fe(2+)-trafficking protein of Shewanella baltica (strain OS223).